The following is a 667-amino-acid chain: Beta-galactosidase LacA (667 aa).

Substrate is bound at residue R109. C113 is a Zn(2+) binding site. Residue N147 participates in substrate binding. The active-site Proton donor is the E148. Zn(2+) contacts are provided by C153, C155, and C158. E307 serves as the catalytic Nucleophile. Residues W315 and E355–H358 each bind substrate.

This sequence belongs to the glycosyl hydrolase 42 family.

It catalyses the reaction Hydrolysis of terminal non-reducing beta-D-galactose residues in beta-D-galactosides.. Hydrolyzes lactose, oNP-galactoside (oNPG), pNP-galactosidase (pNPG), pNP-mannoside, pNP-glucoside, pNP-fucoside, pNP-N-acetylglucosamide, but not pNP-arabinoside or 4-methylumbelliferyl-beta-galactopyranoside (MUG). Transgalactosylates lactose at 10 g/L, but not at 270 g/L. The chain is Beta-galactosidase LacA from Lactobacillus acidophilus.